Here is a 162-residue protein sequence, read N- to C-terminus: 3-hydroxyacyl-[acyl-carrier-protein] dehydratase FabZ (162 aa).

The active site involves His49.

Belongs to the thioester dehydratase family. FabZ subfamily.

The protein localises to the cytoplasm. The enzyme catalyses a (3R)-hydroxyacyl-[ACP] = a (2E)-enoyl-[ACP] + H2O. In terms of biological role, involved in unsaturated fatty acids biosynthesis. Catalyzes the dehydration of short chain beta-hydroxyacyl-ACPs and long chain saturated and unsaturated beta-hydroxyacyl-ACPs. The sequence is that of 3-hydroxyacyl-[acyl-carrier-protein] dehydratase FabZ from Solibacter usitatus (strain Ellin6076).